The following is a 98-amino-acid chain: NADH-ubiquinone oxidoreductase chain 4L (98 aa).

A run of 3 helical transmembrane segments spans residues 1–21 (MSIT…GMFT), 29–49 (SLLC…IVSL), and 61–81 (VILL…LVMV).

This sequence belongs to the complex I subunit 4L family. As to quaternary structure, core subunit of respiratory chain NADH dehydrogenase (Complex I) which is composed of 45 different subunits.

The protein resides in the mitochondrion inner membrane. The enzyme catalyses a ubiquinone + NADH + 5 H(+)(in) = a ubiquinol + NAD(+) + 4 H(+)(out). Functionally, core subunit of the mitochondrial membrane respiratory chain NADH dehydrogenase (Complex I) which catalyzes electron transfer from NADH through the respiratory chain, using ubiquinone as an electron acceptor. Part of the enzyme membrane arm which is embedded in the lipid bilayer and involved in proton translocation. The sequence is that of NADH-ubiquinone oxidoreductase chain 4L (MT-ND4L) from Ochotona collaris (Collared pika).